Consider the following 358-residue polypeptide: Fructose-bisphosphate aldolase 6, cytosolic (358 aa).

An N-acetylserine modification is found at Ser-2. Arg-39 provides a ligand contact to substrate. Cys-68 carries the post-translational modification S-glutathionyl cysteine; transient. S-glutathionyl cysteine; transient; alternate is present on Cys-173. At Cys-173 the chain carries S-nitrosocysteine; transient; alternate. Catalysis depends on Glu-183, which acts as the Proton acceptor. Lys-225 (schiff-base intermediate with dihydroxyacetone-P) is an active-site residue. Residues Ser-266–Gly-268 and Arg-298 contribute to the substrate site. Position 350 is a phosphoserine (Ser-350). N6,N6,N6-trimethyllysine is present on Lys-354.

The protein belongs to the class I fructose-bisphosphate aldolase family. In terms of assembly, homotetramer. Interacts with TRX1 and TRX3. Interacts with GAPC1 and VDAC3. In terms of processing, S-glutathionylated at Cys-68 and Cys-173. S-nitrosylated at Cys-173. In terms of tissue distribution, expressed in roots, rosettes leaves, cauline leaves, stems and flowers.

It localises to the cytoplasm. It is found in the cytosol. The protein localises to the nucleus. Its subcellular location is the mitochondrion. The enzyme catalyses beta-D-fructose 1,6-bisphosphate = D-glyceraldehyde 3-phosphate + dihydroxyacetone phosphate. Its pathway is carbohydrate degradation; glycolysis; D-glyceraldehyde 3-phosphate and glycerone phosphate from D-glucose: step 4/4. Its activity is regulated as follows. Total and irreversible inhibition by S-nitrosoglutathione (GSNO). Partial and reversible inhibition by oxidized glutathione (GSSG). Functionally, fructose-bisphosphate aldolase that plays a key role in glycolysis and gluconeogenesis. Associates with GAPC1 to the outer mitochondrial membrane, in a redox-dependent manner, leading to binding and bundling of actin. Actin binding and bundling occurs under oxidizing conditions and is reversible under reducing conditions. May be part of a redox-dependent retrograde signal transduction network for adaptation upon oxidative stress. This Arabidopsis thaliana (Mouse-ear cress) protein is Fructose-bisphosphate aldolase 6, cytosolic.